The primary structure comprises 60 residues: Large ribosomal subunit protein eL37 (60 aa).

Zn(2+) contacts are provided by cysteine 19, cysteine 22, cysteine 34, and cysteine 37. The C4-type zinc finger occupies 19 to 37; the sequence is CRRCGRMSYHKRHKICSSC.

The protein belongs to the eukaryotic ribosomal protein eL37 family. It depends on Zn(2+) as a cofactor.

Functionally, binds to the 23S rRNA. The protein is Large ribosomal subunit protein eL37 of Methanospirillum hungatei JF-1 (strain ATCC 27890 / DSM 864 / NBRC 100397 / JF-1).